The primary structure comprises 295 residues: Inositol monophosphatase 1 (295 aa).

Residues glutamate 73, aspartate 92, isoleucine 94, aspartate 95, and aspartate 231 each contribute to the Mg(2+) site. Glutamate 73 lines the substrate pocket. Substrate-binding positions include 94–97 (IDGT) and aspartate 231.

The protein belongs to the inositol monophosphatase superfamily. Mg(2+) is required as a cofactor.

The protein localises to the cytoplasm. It localises to the nucleus. It catalyses the reaction a myo-inositol phosphate + H2O = myo-inositol + phosphate. Its pathway is polyol metabolism; myo-inositol biosynthesis; myo-inositol from D-glucose 6-phosphate: step 2/2. Inhibited by Li(+) and Na(+). Responsible for the provision of inositol required for synthesis of phosphatidylinositol and polyphosphoinositides. The sequence is that of Inositol monophosphatase 1 (INM1) from Saccharomyces cerevisiae (strain ATCC 204508 / S288c) (Baker's yeast).